We begin with the raw amino-acid sequence, 514 residues long: Calcium-binding mitochondrial carrier protein SCaMC-2 (514 aa).

Over 1-234 (MARPRSLVSP…EKQTGMWWRH (234 aa)) the chain is Mitochondrial intermembrane. 4 EF-hand domains span residues 56-91 (EHER…LGVH), 92-122 (RTEL…HYLR), 123-158 (DHEK…LGVN), and 159-194 (ISEQ…HSAE). Positions 69, 71, 73, 80, 105, 107, 109, 111, and 116 each coordinate Ca(2+). Solcar repeat units follow at residues 229–315 (GMWW…IKRI), 323–408 (LGIH…LKNA), and 420–508 (PGVF…LKLT). A helical membrane pass occupies residues 235 to 252 (LVAGGGAGAVSRTCTAPL). At 253-289 (DRLKVLMQVHASRSNNMSILGGFTHMIREGGFRSLWR) the chain is on the mitochondrial matrix side. A helical membrane pass occupies residues 290–309 (GNGINVIKIAPESAIKFMAY). At 310-332 (EQIKRIIGSNQETLGIHERFVAG) the chain is on the mitochondrial intermembrane side. The helical transmembrane segment at 333–346 (SLAGVIAQSSIYPM) threads the bilayer. The Mitochondrial matrix segment spans residues 347 to 382 (EVLKTRMALRKTGQYQGVLDCGKKILLQEGLSAFYK). Residues 383 to 402 (GYVPNMLGIIPYAGIDLAVY) traverse the membrane as a helical segment. The Mitochondrial intermembrane portion of the chain corresponds to 403-425 (ETLKNAWLQRYATSSADPGVFVL). Residues 426–443 (LACGTVSSTCGQLASYPL) form a helical membrane-spanning segment. The Mitochondrial matrix segment spans residues 444–482 (ALVRTRMQAEASVEGAPQMTMSKLFKHIVKTEGAFGLYR). The chain crosses the membrane as a helical span at residues 483–502 (GLAPNFMKVIPAVSISYVVY). The Mitochondrial intermembrane portion of the chain corresponds to 503–514 (ENLKLTLGVQSR).

Belongs to the mitochondrial carrier (TC 2.A.29) family.

Its subcellular location is the mitochondrion inner membrane. In terms of biological role, calcium-dependent mitochondrial solute carrier. This Xenopus laevis (African clawed frog) protein is Calcium-binding mitochondrial carrier protein SCaMC-2 (slc25a25).